A 225-amino-acid polypeptide reads, in one-letter code: Nuclear autoantigen Sp-100 (225 aa).

One can recognise an SAND domain in the interval 1 to 25 (SKNWKLSIRCGGYTLKVLMENKLLP). 2 DNA-binding regions (HMG box) span residues 26 to 102 (EPPS…KTYI) and 118 to 186 (PKRP…AAYR). The Nuclear localization signal signature appears at 66–83 (KKCSEMWKTIFAKEKGKF). A coiled-coil region spans residues 157–224 (NNTAAADKQF…EDEQEEENEE (68 aa)). A disordered region spans residues 185–225 (YRAKGMPNSAKKRAVKAEKSKKKREEEEDEEDEQEEENEEE). Positions 194–206 (AKKRAVKAEKSKK) are enriched in basic residues. The segment covering 210–225 (EEEDEEDEQEEENEEE) has biased composition (acidic residues).

As to quaternary structure, homodimer. Interacts with members of the HP1 family of nonhistone chromosomal protein, such as CBX5 and CBX3 via the PxVxL motif. Interacts with ETS1; the interaction is direct and modulates ETS1 transcriptional activity. Interacts with the MRN complex which is composed of two heterodimers RAD50/MRE11 associated with a single NBN; recruits the complex to PML-related bodies. Interacts with HIPK2; positively regulates TP53-dependent transcription. Interacts with CASP8AP2; may negatively regulate CASP8AP2 export from the nucleus to the cytoplasm. In terms of processing, sumoylated. Sumoylated with SUMO1. Sumoylation depends on a functional nuclear localization signal but is not necessary for nuclear import or nuclear body targeting. Sumoylation may stabilize the interaction with CBX5. Phosphorylated.

It is found in the nucleus. The protein localises to the PML body. The protein resides in the nuclear body. Its subcellular location is the cytoplasm. Together with PML, this tumor suppressor is a major constituent of the PML bodies, a subnuclear organelle involved in a large number of physiological processes including cell growth, differentiation and apoptosis. Functions as a transcriptional coactivator of ETS1 and ETS2. Under certain conditions, it may also act as a corepressor of ETS1 preventing its binding to DNA. Through the regulation of ETS1 it may play a role in angiogenesis, controlling endothelial cell motility and invasion. Through interaction with the MRN complex it may be involved in the regulation of telomeres lengthening. May also regulate TP53-mediated transcription and through CASP8AP2, regulate FAS-mediated apoptosis. May also play a role in infection by viruses through mechanisms that may involve chromatin and/or transcriptional regulation. This Gorilla gorilla gorilla (Western lowland gorilla) protein is Nuclear autoantigen Sp-100 (SP100).